The primary structure comprises 198 residues: Carnitine operon protein CaiE (198 aa).

Positions 179–198 (VEENRPRLKGTTDVKPKSAQ) are disordered. Over residues 180-198 (EENRPRLKGTTDVKPKSAQ) the composition is skewed to basic and acidic residues.

It belongs to the transferase hexapeptide repeat family.

It functions in the pathway amine and polyamine metabolism; carnitine metabolism. Its function is as follows. Overproduction of CaiE stimulates the activity of CaiB and CaiD. The protein is Carnitine operon protein CaiE of Salmonella agona (strain SL483).